The sequence spans 470 residues: Uronate isomerase (470 aa).

The protein belongs to the metallo-dependent hydrolases superfamily. Uronate isomerase family.

The enzyme catalyses D-glucuronate = D-fructuronate. It catalyses the reaction aldehydo-D-galacturonate = keto-D-tagaturonate. The protein operates within carbohydrate metabolism; pentose and glucuronate interconversion. In Sphingopyxis alaskensis (strain DSM 13593 / LMG 18877 / RB2256) (Sphingomonas alaskensis), this protein is Uronate isomerase.